Here is an 864-residue protein sequence, read N- to C-terminus: Valine--tRNA ligase (864 aa).

A 'HIGH' region motif is present at residues 42-52 (PTISGKLHIGH). The 'KMSKS' region signature appears at 589–593 (KMSKS). Lys-592 is a binding site for ATP.

The protein belongs to the class-I aminoacyl-tRNA synthetase family. ValS type 2 subfamily. Monomer.

Its subcellular location is the cytoplasm. It carries out the reaction tRNA(Val) + L-valine + ATP = L-valyl-tRNA(Val) + AMP + diphosphate. In terms of biological role, catalyzes the attachment of valine to tRNA(Val). As ValRS can inadvertently accommodate and process structurally similar amino acids such as threonine, to avoid such errors, it has a 'posttransfer' editing activity that hydrolyzes mischarged Thr-tRNA(Val) in a tRNA-dependent manner. The sequence is that of Valine--tRNA ligase from Wolbachia pipientis wMel.